Here is a 119-residue protein sequence, read N- to C-terminus: Immunoglobulin heavy variable 2-70D (119 aa).

The signal sequence occupies residues 1-19 (MDILCSTLLLLTVPSWVLS). Gln-20 is subject to Pyrrolidone carboxylic acid. Residues 20–44 (QVTLKESGPALVKPTQTLTLTCTFS) form a framework-1 region. The 100-residue stretch at 20–119 (QVTLKESGPA…DTATYYCARI (100 aa)) folds into the Ig-like domain. A disulfide bridge links Cys-41 with Cys-116. The interval 45 to 54 (GFSLSTSGMR) is complementarity-determining-1. Positions 55–71 (VSWIRQPPGKALEWLAR) are framework-2. Residues 72–78 (IDWDDDK) are complementarity-determining-2. The tract at residues 79–116 (FYSTSLKTRLTISKDTSKNQVVLTMTNMDPVDTATYYC) is framework-3. A complementarity-determining-3 region spans residues 117-119 (ARI).

In terms of assembly, immunoglobulins are composed of two identical heavy chains and two identical light chains; disulfide-linked.

It is found in the secreted. Its subcellular location is the cell membrane. In terms of biological role, v region of the variable domain of immunoglobulin heavy chains that participates in the antigen recognition. Immunoglobulins, also known as antibodies, are membrane-bound or secreted glycoproteins produced by B lymphocytes. In the recognition phase of humoral immunity, the membrane-bound immunoglobulins serve as receptors which, upon binding of a specific antigen, trigger the clonal expansion and differentiation of B lymphocytes into immunoglobulins-secreting plasma cells. Secreted immunoglobulins mediate the effector phase of humoral immunity, which results in the elimination of bound antigens. The antigen binding site is formed by the variable domain of one heavy chain, together with that of its associated light chain. Thus, each immunoglobulin has two antigen binding sites with remarkable affinity for a particular antigen. The variable domains are assembled by a process called V-(D)-J rearrangement and can then be subjected to somatic hypermutations which, after exposure to antigen and selection, allow affinity maturation for a particular antigen. In Homo sapiens (Human), this protein is Immunoglobulin heavy variable 2-70D.